The chain runs to 478 residues: Phenylalanine--tRNA ligase alpha subunit (478 aa).

L-phenylalanine-binding positions include threonine 318, 357–359, and tyrosine 397; that span reads QLE. Glutamate 399 is a Mg(2+) binding site. Phenylalanine 422 provides a ligand contact to L-phenylalanine.

This sequence belongs to the class-II aminoacyl-tRNA synthetase family. Phe-tRNA synthetase alpha subunit type 2 subfamily. As to quaternary structure, tetramer of two alpha and two beta subunits. The cofactor is Mg(2+).

The protein resides in the cytoplasm. The enzyme catalyses tRNA(Phe) + L-phenylalanine + ATP = L-phenylalanyl-tRNA(Phe) + AMP + diphosphate + H(+). The sequence is that of Phenylalanine--tRNA ligase alpha subunit from Methanospirillum hungatei JF-1 (strain ATCC 27890 / DSM 864 / NBRC 100397 / JF-1).